Here is a 310-residue protein sequence, read N- to C-terminus: Flavin-dependent trigonelline monooxygenase, reductase component (310 aa).

FMN contacts are provided by residues 40 to 43 (TANS), 57 to 63 (SIAKTSS), 90 to 91 (FA), and Arg-97.

It belongs to the non-flavoprotein flavin reductase family. Homodimer. The trigonelline monooxygenase is composed of a reductase component TgnA and an oxygenase component TgnB.

It catalyses the reaction a reduced flavin + NAD(+) = an oxidized flavin + NADH + 2 H(+). The enzyme catalyses FADH2 + NAD(+) = FAD + NADH + 2 H(+). It carries out the reaction FMNH2 + NAD(+) = FMN + NADH + 2 H(+). Its activity is regulated as follows. Maximal reductase activity is achieved only upon trigonelline (TG) binding to the reductase component before interaction with NADH. It seems that TgnA undergoes an allosteric transition upon trigonelline (TG) binding accounting for the positive cooperativity toward NADH oxidation. Functionally, involved in the degradation of the pyridine ring of trigonelline (TG; N-methylnicotinate) into succinate and methylamine as carbon and nitrogen sources, respectively. TgnA catalyzes the reduction of flavin (FMN or FAD) by NADH and supplies the reduced flavin to the oxygenase component TgnB. This chain is Flavin-dependent trigonelline monooxygenase, reductase component, found in Acinetobacter baylyi (strain ATCC 33305 / BD413 / ADP1).